The following is a 68-amino-acid chain: ATP synthase F(0) complex subunit 8 (68 aa).

The chain crosses the membrane as a helical span at residues Thr-8–Phe-24. Lys-54 bears the N6-acetyllysine; alternate mark. Lys-54 carries the N6-succinyllysine; alternate modification. Lys-57 carries the post-translational modification N6-acetyllysine.

Belongs to the ATPase protein 8 family. Component of the ATP synthase complex composed at least of ATP5F1A/subunit alpha, ATP5F1B/subunit beta, ATP5MC1/subunit c (homooctomer), MT-ATP6/subunit a, MT-ATP8/subunit 8, ATP5ME/subunit e, ATP5MF/subunit f, ATP5MG/subunit g, ATP5MK/subunit k, ATP5MJ/subunit j, ATP5F1C/subunit gamma, ATP5F1D/subunit delta, ATP5F1E/subunit epsilon, ATP5PF/subunit F6, ATP5PB/subunit b, ATP5PD/subunit d, ATP5PO/subunit OSCP. ATP synthase complex consists of a soluble F(1) head domain (subunits alpha(3) and beta(3)) - the catalytic core - and a membrane F(0) domain - the membrane proton channel (subunits c, a, 8, e, f, g, k and j). These two domains are linked by a central stalk (subunits gamma, delta, and epsilon) rotating inside the F1 region and a stationary peripheral stalk (subunits F6, b, d, and OSCP). Interacts with PRICKLE3.

It localises to the mitochondrion membrane. Functionally, subunit 8, of the mitochondrial membrane ATP synthase complex (F(1)F(0) ATP synthase or Complex V) that produces ATP from ADP in the presence of a proton gradient across the membrane which is generated by electron transport complexes of the respiratory chain. ATP synthase complex consist of a soluble F(1) head domain - the catalytic core - and a membrane F(1) domain - the membrane proton channel. These two domains are linked by a central stalk rotating inside the F(1) region and a stationary peripheral stalk. During catalysis, ATP synthesis in the catalytic domain of F(1) is coupled via a rotary mechanism of the central stalk subunits to proton translocation. In vivo, can only synthesize ATP although its ATP hydrolase activity can be activated artificially in vitro. Part of the complex F(0) domain. In Lemur catta (Ring-tailed lemur), this protein is ATP synthase F(0) complex subunit 8.